The following is a 128-amino-acid chain: Cytochrome c-type biogenesis protein CcmE (128 aa).

Over 1 to 8 the chain is Cytoplasmic; it reads MQKRVRNR. Residues 9-29 form a helical; Signal-anchor for type II membrane protein membrane-spanning segment; that stretch reads LITIIICFCSACLGISIILYN. Residues 30-128 lie on the Extracellular side of the membrane; the sequence is LEKNIVFFLP…KHDENYRPPQ (99 aa). Heme is bound by residues histidine 120 and tyrosine 124.

This sequence belongs to the CcmE/CycJ family.

Its subcellular location is the cell membrane. Heme chaperone required for the biogenesis of c-type cytochromes. Transiently binds heme delivered by CcmC and transfers the heme to apo-cytochromes in a process facilitated by CcmF and CcmH. The protein is Cytochrome c-type biogenesis protein CcmE of Rickettsia africae (strain ESF-5).